A 414-amino-acid chain; its full sequence is Protein SOSEKI 2 (414 aa).

The interval 44–135 (RRVQVVYYLT…YVLKGSEITD (92 aa)) is DIX-like oligomerization domain. Residues 171–273 (SFDDAELYVG…GDPVEPGSGR (103 aa)) are disordered. The span at 173–192 (DDAELYVGEEEEEEDGEYEL) shows a compositional bias: acidic residues. Residues 205–229 (PQSRCSRGVSTETMESTEQKPNLTK) show a composition bias toward polar residues. The span at 230–242 (TEQDLQVRSDSSD) shows a compositional bias: basic and acidic residues. Positions 283-284 (CG) match the Association to cell membranes motif.

Belongs to the SOSEKI family. Homodimer. Forms long polymer filaments with other SOKs proteins polymers (e.g. SOK1, SOK2, SOK3 and SOK4) crucial for polar localization and biological activity. Binds to ANGUSTIFOLIA (AN). In terms of tissue distribution, expressed during embryogenesis and in roots.

Its subcellular location is the cell membrane. Part of a three-gene cluster containing FLC, UFC and DFC, which is coordinately regulated in response to vernalization. Also regulated by FLX. SOSEKI proteins (SOK1-5) locally interpret global polarity cues and can influence cell division orientation to coordinate cell polarization relative to body axes, probably by guiding ANGUSTIFOLIA (AN) polarized localization. This Arabidopsis thaliana (Mouse-ear cress) protein is Protein SOSEKI 2.